Consider the following 201-residue polypeptide: Glutathione peroxidase 1 (201 aa).

Ser32 carries the post-translational modification Phosphoserine. Sec47 is an active-site residue. Sec47 is a non-standard amino acid (selenocysteine). Lys86, Lys112, and Lys146 each carry N6-acetyllysine; alternate. N6-succinyllysine; alternate is present on residues Lys86, Lys112, and Lys146. Ser195 and Ser199 each carry phosphoserine.

Belongs to the glutathione peroxidase family. As to quaternary structure, homotetramer. Interacts with MIEN1. Post-translationally, during periods of oxidative stress, Sec-47 may react with a superoxide radical, irreversibly lose hydroselenide and be converted to dehydroalanine.

It localises to the cytoplasm. It catalyses the reaction 2 glutathione + H2O2 = glutathione disulfide + 2 H2O. The enzyme catalyses (12S)-hydroperoxy-(5Z,8Z,10E,14Z)-eicosatetraenoate + 2 glutathione = (12S)-hydroxy-(5Z,8Z,10E,14Z)-eicosatetraenoate + glutathione disulfide + H2O. Protects the hemoglobin in erythrocytes from oxidative breakdown. In platelets, plays a crucial role of glutathione peroxidase in the arachidonic acid metabolism. The protein is Glutathione peroxidase 1 (GPX1) of Hylobates lar (Lar gibbon).